The primary structure comprises 162 residues: Nitrogen regulatory protein (162 aa).

One can recognise a PTS EIIA type-2 domain in the interval 12 to 156 (NVLNQECTRS…EELYEIITEA (145 aa)). The active-site Tele-phosphohistidine intermediate is the His-73.

It is found in the cytoplasm. Seems to have a role in regulating nitrogen assimilation. The sequence is that of Nitrogen regulatory protein (ptsN) from Klebsiella oxytoca.